The chain runs to 1247 residues: Respiratory nitrate reductase 1 alpha chain (1247 aa).

The 4Fe-4S Mo/W bis-MGD-type domain maps to 43-107 (DKIVRSTHGV…SYSWYLYSAN (65 aa)). His50, Cys54, Cys58, and Cys93 together coordinate [4Fe-4S] cluster. Asp223 contacts Mo-bis(molybdopterin guanine dinucleotide).

Belongs to the prokaryotic molybdopterin-containing oxidoreductase family. In terms of assembly, dimer of heterotrimers each composed of an alpha, a beta and a gamma chain. Alpha and beta are catalytic chains; gamma chains are involved in binding the enzyme complex to the cytoplasmic membrane. Interacts with the NarJ chaperone. Requires [4Fe-4S] cluster as cofactor. It depends on Mo-bis(molybdopterin guanine dinucleotide) as a cofactor.

It is found in the cell membrane. The catalysed reaction is nitrate + a quinol = a quinone + nitrite + H2O. Its function is as follows. The nitrate reductase enzyme complex allows E.coli to use nitrate as an electron acceptor during anaerobic growth. The alpha chain is the actual site of nitrate reduction. This Escherichia coli (strain K12) protein is Respiratory nitrate reductase 1 alpha chain (narG).